The chain runs to 264 residues: S-adenosylmethionine decarboxylase proenzyme (264 aa).

The active-site Schiff-base intermediate with substrate; via pyruvic acid is Ser-111. Position 111 is a pyruvic acid (Ser); by autocatalysis (Ser-111). His-116 serves as the catalytic Proton acceptor; for processing activity. The active-site Proton donor; for catalytic activity is Cys-139.

This sequence belongs to the prokaryotic AdoMetDC family. Type 2 subfamily. As to quaternary structure, heterooctamer of four alpha and four beta chains arranged as a tetramer of alpha/beta heterodimers. Requires pyruvate as cofactor. Is synthesized initially as an inactive proenzyme. Formation of the active enzyme involves a self-maturation process in which the active site pyruvoyl group is generated from an internal serine residue via an autocatalytic post-translational modification. Two non-identical subunits are generated from the proenzyme in this reaction, and the pyruvate is formed at the N-terminus of the alpha chain, which is derived from the carboxyl end of the proenzyme. The post-translation cleavage follows an unusual pathway, termed non-hydrolytic serinolysis, in which the side chain hydroxyl group of the serine supplies its oxygen atom to form the C-terminus of the beta chain, while the remainder of the serine residue undergoes an oxidative deamination to produce ammonia and the pyruvoyl group blocking the N-terminus of the alpha chain.

The catalysed reaction is S-adenosyl-L-methionine + H(+) = S-adenosyl 3-(methylsulfanyl)propylamine + CO2. It participates in amine and polyamine biosynthesis; S-adenosylmethioninamine biosynthesis; S-adenosylmethioninamine from S-adenosyl-L-methionine: step 1/1. In terms of biological role, catalyzes the decarboxylation of S-adenosylmethionine to S-adenosylmethioninamine (dcAdoMet), the propylamine donor required for the synthesis of the polyamines spermine and spermidine from the diamine putrescine. In Geobacillus thermodenitrificans (strain NG80-2), this protein is S-adenosylmethionine decarboxylase proenzyme.